Here is a 150-residue protein sequence, read N- to C-terminus: Protein Turandot X1/X2 (150 aa).

The signal sequence occupies residues 1–22 (MRLYIGSLLICVLLGIVPFATA). Residues 127-150 (REEGQSNHANSPTTSPSRIQKMTK) are disordered. Over residues 132–150 (SNHANSPTTSPSRIQKMTK) the composition is skewed to polar residues.

This sequence belongs to the Turandot family.

The protein resides in the secreted. A humoral factor that may play a role in stress tolerance. This chain is Protein Turandot X1/X2, found in Drosophila sechellia (Fruit fly).